Reading from the N-terminus, the 555-residue chain is Probable beta-glucosidase btgE (555 aa).

Residues 1–18 (MRGAILATAAAFAGTAVA) form the signal peptide. 2 disordered regions span residues 92-114 (TSSAAPVETPSETPSPTPEVTLP) and 263-290 (TTSAASTTTAVPSSSTTTSSATSVPTGA). Low complexity predominate over residues 263–288 (TTSAASTTTAVPSSSTTTSSATSVPT). The active-site Proton donor is the Glu-392. The active-site Nucleophile is Glu-488.

It belongs to the glycosyl hydrolase 17 family.

The protein localises to the secreted. The protein resides in the cell wall. The catalysed reaction is Hydrolysis of terminal, non-reducing beta-D-glucosyl residues with release of beta-D-glucose.. It participates in glycan metabolism; cellulose degradation. Its function is as follows. Beta-glucosidases are one of a number of cellulolytic enzymes involved in the degradation of cellulosic biomass. Catalyzes the last step releasing glucose from the inhibitory cellobiose. This is Probable beta-glucosidase btgE (btgE) from Emericella nidulans (strain FGSC A4 / ATCC 38163 / CBS 112.46 / NRRL 194 / M139) (Aspergillus nidulans).